The following is a 145-amino-acid chain: Peptide methionine sulfoxide reductase MsrB (145 aa).

The MsrB domain occupies K6–V129. Residue C118 is the Nucleophile of the active site.

It belongs to the MsrB Met sulfoxide reductase family.

The catalysed reaction is L-methionyl-[protein] + [thioredoxin]-disulfide + H2O = L-methionyl-(R)-S-oxide-[protein] + [thioredoxin]-dithiol. In Listeria innocua serovar 6a (strain ATCC BAA-680 / CLIP 11262), this protein is Peptide methionine sulfoxide reductase MsrB.